We begin with the raw amino-acid sequence, 185 residues long: MEIQNIVASVDLKGEVNLDECSVILQGEYEPEQFPGLVYRLEDIGTVVLIFRSGKMVCTGAKNREQIYKSVERVREDLEKKCGVKFHGEPEVEIQNIVASIDFHVPLDLDTIAEVLVGDEDVEGIEYEPEQFPGLVLRLREPKVAMLLFYSGKAVCTGAKTEEEPEKAVKKIAEKIEKYGLKLTG.

2 consecutive repeat copies span residues 3–78 (IQNI…REDL) and 94–176 (IQNI…AEKI).

Belongs to the TBP family.

In terms of biological role, general factor that plays a role in the activation of archaeal genes transcribed by RNA polymerase. Binds specifically to the TATA box promoter element which lies close to the position of transcription initiation. The protein is TATA-box-binding protein of Methanopyrus kandleri (strain AV19 / DSM 6324 / JCM 9639 / NBRC 100938).